The chain runs to 329 residues: Ribosomal RNA small subunit methyltransferase H (329 aa).

Residues 39–41 (GGY), Asp57, Phe84, Asp100, and Gln107 contribute to the S-adenosyl-L-methionine site. The tract at residues 285–305 (GPDKDELAQNPRSRSALLRVG) is disordered.

The protein belongs to the methyltransferase superfamily. RsmH family.

It localises to the cytoplasm. It catalyses the reaction cytidine(1402) in 16S rRNA + S-adenosyl-L-methionine = N(4)-methylcytidine(1402) in 16S rRNA + S-adenosyl-L-homocysteine + H(+). Functionally, specifically methylates the N4 position of cytidine in position 1402 (C1402) of 16S rRNA. The chain is Ribosomal RNA small subunit methyltransferase H from Ruegeria sp. (strain TM1040) (Silicibacter sp.).